Here is a 191-residue protein sequence, read N- to C-terminus: GTP cyclohydrolase 1 (191 aa).

Zn(2+) is bound by residues cysteine 80, histidine 83, and cysteine 151.

This sequence belongs to the GTP cyclohydrolase I family. As to quaternary structure, toroid-shaped homodecamer, composed of two pentamers of five dimers.

The catalysed reaction is GTP + H2O = 7,8-dihydroneopterin 3'-triphosphate + formate + H(+). Its pathway is cofactor biosynthesis; 7,8-dihydroneopterin triphosphate biosynthesis; 7,8-dihydroneopterin triphosphate from GTP: step 1/1. The polypeptide is GTP cyclohydrolase 1 (Leifsonia xyli subsp. xyli (strain CTCB07)).